Reading from the N-terminus, the 518-residue chain is DNA-(apurinic or apyrimidinic site) endonuclease 2 (518 aa).

Residues Asn-8 and Glu-48 each coordinate Mg(2+). Tyr-156 is a catalytic residue. 4 residues coordinate Mg(2+): Asp-197, Asn-199, Asp-303, and His-304. The active-site Proton donor/acceptor is the Asp-197. His-304 functions as the Proton acceptor in the catalytic mechanism. The span at 355-405 (STLQHNNQTRVQTCQNKAQVRSTRPQPSQVGSSRGQKNLKSYFQPSPSCPQ) shows a compositional bias: polar residues. The interval 355–407 (STLQHNNQTRVQTCQNKAQVRSTRPQPSQVGSSRGQKNLKSYFQPSPSCPQAS) is disordered. A Glycyl lysine isopeptide (Lys-Gly) (interchain with G-Cter in ubiquitin) cross-link involves residue Lys-371. The tract at residues 390–397 (QKNLKSYF) is required for the interaction and colocalization with PCNA in nuclear foci in presence of oxidative-induced DNA damaging agents. Residues Cys-469, His-472, Cys-495, and Cys-509 each contribute to the Zn(2+) site. The GRF-type zinc finger occupies 469 to 518 (CGGHREPCVMRTVKKPGPNLGRRFYMCARPRGPPTDPSSRCNFFLWSRPS).

It belongs to the DNA repair enzymes AP/ExoA family. As to quaternary structure, interacts with PCNA; this interaction is triggered by reactive oxygen species and increased by misincorporation of uracil in nuclear DNA. It depends on Mg(2+) as a cofactor. Mn(2+) serves as cofactor. In terms of processing, ubiquitinated by the CUL9-RBX1 complex. Ubiquitinated by MKRN3 at Lys-371 leading to proteasomal degradation. Highly expressed in brain and kidney. Weakly expressed in the fetal brain.

It localises to the nucleus. The protein localises to the cytoplasm. Its subcellular location is the mitochondrion. The enzyme catalyses Exonucleolytic cleavage in the 3'- to 5'-direction to yield nucleoside 5'-phosphates.. Its activity is regulated as follows. 3'-5' exonuclease activity is activated by sodium and manganese. 3'-5' exonuclease and 3'-phosphodiesterase activities are stimulated in presence of PCNA. Its function is as follows. Functions as a weak apurinic/apyrimidinic (AP) endodeoxyribonuclease in the DNA base excision repair (BER) pathway of DNA lesions induced by oxidative and alkylating agents. Initiates repair of AP sites in DNA by catalyzing hydrolytic incision of the phosphodiester backbone immediately adjacent to the damage, generating a single-strand break with 5'-deoxyribose phosphate and 3'-hydroxyl ends. Also displays double-stranded DNA 3'-5' exonuclease, 3'-phosphodiesterase activities. Shows robust 3'-5' exonuclease activity on 3'-recessed heteroduplex DNA and is able to remove mismatched nucleotides preferentially. Also exhibits 3'-5' exonuclease activity on a single nucleotide gap containing heteroduplex DNA and on blunt-ended substrates. Shows fairly strong 3'-phosphodiesterase activity involved in the removal of 3'-damaged termini formed in DNA by oxidative agents. In the nucleus functions in the PCNA-dependent BER pathway. Plays a role in reversing blocked 3' DNA ends, problematic lesions that preclude DNA synthesis. Required for somatic hypermutation (SHM) and DNA cleavage step of class switch recombination (CSR) of immunoglobulin genes. Required for proper cell cycle progression during proliferation of peripheral lymphocytes. The sequence is that of DNA-(apurinic or apyrimidinic site) endonuclease 2 (APEX2) from Homo sapiens (Human).